Reading from the N-terminus, the 185-residue chain is UPF0669 protein C6orf120 homolog (185 aa).

Positions 1 to 23 are cleaved as a signal peptide; the sequence is MATPWRRALLMILASQVVTLVKC. N-linked (GlcNAc...) asparagine glycosylation occurs at Asn-47.

This sequence belongs to the UPF0669 family.

The protein resides in the secreted. Functionally, may be involved in induction of apoptosis in CD4(+) T-cells, but not CD8(+) T-cells or hepatocytes. The chain is UPF0669 protein C6orf120 homolog from Mus musculus (Mouse).